Here is a 446-residue protein sequence, read N- to C-terminus: Glutamine synthetase (446 aa).

Residues 14–106 (NNVKFIRFQF…VICDVYTTNG (93 aa)) enclose the GS beta-grasp domain. In terms of domain architecture, GS catalytic spans 113-446 (PRGCLKRVLA…DWETKQYLKI (334 aa)). Positions 137 and 139 each coordinate Mg(2+). An ATP-binding site is contributed by E187. The Mg(2+) site is built by E192 and E199. L-glutamate is bound by residues 243–244 (NG) and G244. H248 contributes to the Mg(2+) binding site. ATP contacts are provided by residues 250–252 (HQS) and S252. Residues R301, E307, and R319 each contribute to the L-glutamate site. ATP is bound by residues R319, R324, and K331. Position 336 (E336) interacts with Mg(2+). L-glutamate is bound at residue R338.

Belongs to the glutamine synthetase family. Oligomer of 12 subunits arranged in the form of two hexagons. Requires Mg(2+) as cofactor.

It localises to the cytoplasm. It catalyses the reaction L-glutamate + NH4(+) + ATP = L-glutamine + ADP + phosphate + H(+). Its function is as follows. Probably involved in nitrogen metabolism via ammonium assimilation. Catalyzes the ATP-dependent biosynthesis of glutamine from glutamate and ammonia. The protein is Glutamine synthetase of Methanococcus maripaludis (strain DSM 14266 / JCM 13030 / NBRC 101832 / S2 / LL).